Consider the following 269-residue polypeptide: Formamidopyrimidine-DNA glycosylase (269 aa).

The active-site Schiff-base intermediate with DNA is the Pro2. The active-site Proton donor is Glu3. Catalysis depends on Lys57, which acts as the Proton donor; for beta-elimination activity. Residues His90, Arg109, and Lys150 each coordinate DNA. The FPG-type zinc finger occupies 235–269 (QVYGRGGEPCRVCGTPIQMAKHGQRSTFFCPACQH). Arg259 serves as the catalytic Proton donor; for delta-elimination activity.

This sequence belongs to the FPG family. In terms of assembly, monomer. Zn(2+) serves as cofactor.

It catalyses the reaction Hydrolysis of DNA containing ring-opened 7-methylguanine residues, releasing 2,6-diamino-4-hydroxy-5-(N-methyl)formamidopyrimidine.. It carries out the reaction 2'-deoxyribonucleotide-(2'-deoxyribose 5'-phosphate)-2'-deoxyribonucleotide-DNA = a 3'-end 2'-deoxyribonucleotide-(2,3-dehydro-2,3-deoxyribose 5'-phosphate)-DNA + a 5'-end 5'-phospho-2'-deoxyribonucleoside-DNA + H(+). In terms of biological role, involved in base excision repair of DNA damaged by oxidation or by mutagenic agents. Acts as a DNA glycosylase that recognizes and removes damaged bases. Has a preference for oxidized purines, such as 7,8-dihydro-8-oxoguanine (8-oxoG). Has AP (apurinic/apyrimidinic) lyase activity and introduces nicks in the DNA strand. Cleaves the DNA backbone by beta-delta elimination to generate a single-strand break at the site of the removed base with both 3'- and 5'-phosphates. This Sodalis glossinidius (strain morsitans) protein is Formamidopyrimidine-DNA glycosylase.